Reading from the N-terminus, the 345-residue chain is Uroporphyrinogen decarboxylase (345 aa).

Residues 28 to 32, Asp-77, Tyr-152, Ser-207, and His-321 contribute to the substrate site; that span reads RQAGR.

Belongs to the uroporphyrinogen decarboxylase family. As to quaternary structure, homodimer.

The protein resides in the cytoplasm. The enzyme catalyses uroporphyrinogen III + 4 H(+) = coproporphyrinogen III + 4 CO2. The protein operates within porphyrin-containing compound metabolism; protoporphyrin-IX biosynthesis; coproporphyrinogen-III from 5-aminolevulinate: step 4/4. Functionally, catalyzes the decarboxylation of four acetate groups of uroporphyrinogen-III to yield coproporphyrinogen-III. This Arthrobacter sp. (strain FB24) protein is Uroporphyrinogen decarboxylase.